Here is an 83-residue protein sequence, read N- to C-terminus: Sec-independent protein translocase protein TatA (83 aa).

The chain crosses the membrane as a helical span at residues methionine 1–glycine 21. 2 stretches are compositionally biased toward basic and acidic residues: residues glutamate 47–serine 57 and alanine 71–valine 83. Positions glutamate 47–valine 83 are disordered.

This sequence belongs to the TatA/E family. The Tat system comprises two distinct complexes: a TatABC complex, containing multiple copies of TatA, TatB and TatC subunits, and a separate TatA complex, containing only TatA subunits. Substrates initially bind to the TatABC complex, which probably triggers association of the separate TatA complex to form the active translocon.

The protein localises to the cell inner membrane. Functionally, part of the twin-arginine translocation (Tat) system that transports large folded proteins containing a characteristic twin-arginine motif in their signal peptide across membranes. TatA could form the protein-conducting channel of the Tat system. The chain is Sec-independent protein translocase protein TatA from Shewanella woodyi (strain ATCC 51908 / MS32).